The primary structure comprises 60 residues: Large ribosomal subunit protein bL32 (60 aa).

The interval 1-28 is disordered; sequence MAVQQNKKSRSARDMRRSHDALEASTLS. Residues 11–22 show a composition bias toward basic and acidic residues; it reads SARDMRRSHDAL.

It belongs to the bacterial ribosomal protein bL32 family.

The protein is Large ribosomal subunit protein bL32 of Pseudomonas savastanoi pv. phaseolicola (strain 1448A / Race 6) (Pseudomonas syringae pv. phaseolicola (strain 1448A / Race 6)).